Reading from the N-terminus, the 61-residue chain is Ferredoxin (61 aa).

Positions 2–28 (LYITEECTYCGACEPECPTNAISAGSE) constitute a 4Fe-4S ferredoxin-type domain. Positions 8, 11, 14, 18, 37, 40, 49, and 53 each coordinate [4Fe-4S] cluster.

The cofactor is [4Fe-4S] cluster.

Ferredoxins are iron-sulfur proteins that transfer electrons in a wide variety of metabolic reactions. This chain is Ferredoxin, found in Chlorobaculum thiosulfatiphilum (Chlorobium limicola f.sp. thiosulfatophilum).